Here is a 1021-residue protein sequence, read N- to C-terminus: Sodium/potassium-transporting ATPase subunit alpha-1 (1021 aa).

A propeptide spanning residues M1–V5 is cleaved from the precursor. The span at M1–E11 shows a compositional bias: basic and acidic residues. Residues M1–V37 form a disordered region. Residues G6 to P85 lie on the Cytoplasmic side of the membrane. The residue at position 9 (K9) is an N6-acetyllysine. Phosphotyrosine is present on Y10. The residue at position 16 (S16) is a Phosphoserine; by PKC. K21 bears the N6-acetyllysine mark. The segment covering K26–V37 has biased composition (basic and acidic residues). 2 positions are modified to phosphoserine: S38 and S45. The segment at P80–P82 is phosphoinositide-3 kinase binding. The chain crosses the membrane as a helical span at residues E86 to A106. The Extracellular segment spans residues I107–Y129. The helical transmembrane segment at L130–A150 threads the bilayer. The Cytoplasmic portion of the chain corresponds to K151 to I286. Residues S214–N233 form a disordered region. Position 226 is a phosphoserine (S226). The residue at position 258 (Y258) is a Phosphotyrosine. A helical transmembrane segment spans residues E287–I306. The Extracellular portion of the chain corresponds to L307–A318. Residues V319–A336 traverse the membrane as a helical segment. Topologically, residues T337 to L770 are cytoplasmic. D374 (4-aspartylphosphate intermediate) is an active-site residue. Phosphoserine is present on residues S450 and S482. An ATP-binding site is contributed by K485. Y540 is subject to Phosphotyrosine. The mediates interaction with SCN7A stretch occupies residues R594–D715. K659 bears the N6-succinyllysine mark. Residues S666 and S673 each carry the phosphoserine modification. D715 and D719 together coordinate Mg(2+). A helical transmembrane segment spans residues K771 to I790. The Extracellular segment spans residues F791–L800. A helical membrane pass occupies residues G801–A821. At Y822–K841 the chain is on the cytoplasmic side. Residues L842–F864 form a helical membrane-spanning segment. The Extracellular segment spans residues F865–C916. The helical transmembrane segment at H917 to K936 threads the bilayer. Residues T937–N949 are Cytoplasmic-facing. S941 carries the phosphoserine; by PKA modification. A helical membrane pass occupies residues K950 to Y968. At C969–P983 the chain is on the extracellular side. The helical transmembrane segment at T984 to K1004 threads the bilayer. Over L1005 to Y1021 the chain is Cytoplasmic.

It belongs to the cation transport ATPase (P-type) (TC 3.A.3) family. Type IIC subfamily. As to quaternary structure, the sodium/potassium-transporting ATPase is composed of a catalytic alpha subunit, an auxiliary non-catalytic beta subunit and an additional regulatory subunit. Interacts with regulatory subunit FXYD1. Interacts with regulatory subunit FXYD3. Interacts with SIK1. Interacts with SLC35G1 and STIM1. Interacts with CLN3; this interaction regulates the sodium/potassium-transporting ATPase complex localization at the plasma membrane. Interacts with SCN7A; activates ATP1A1 P-type sodium:potassium-exchanging transporter activity which indirectly signals to nearby neurons to regulate sodium homeostasis. In terms of processing, phosphorylation on Tyr-10 modulates pumping activity. Phosphorylation of Ser-941 by PKA modulates the response of ATP1A1 to PKC. Dephosphorylation by protein phosphatase 2A (PP2A) following increases in intracellular sodium, leading to increase catalytic activity.

It localises to the cell membrane. It is found in the basolateral cell membrane. The protein resides in the sarcolemma. Its subcellular location is the cell projection. The protein localises to the axon. It localises to the melanosome. The enzyme catalyses K(+)(out) + Na(+)(in) + ATP + H2O = K(+)(in) + Na(+)(out) + ADP + phosphate + H(+). This is the catalytic component of the active enzyme, which catalyzes the hydrolysis of ATP coupled with the exchange of sodium and potassium ions across the plasma membrane. This action creates the electrochemical gradient of sodium and potassium ions, providing the energy for active transport of various nutrients. Could also be part of an osmosensory signaling pathway that senses body-fluid sodium levels and controls salt intake behavior as well as voluntary water intake to regulate sodium homeostasis. In Sus scrofa (Pig), this protein is Sodium/potassium-transporting ATPase subunit alpha-1 (ATP1A1).